Consider the following 513-residue polypeptide: MQLSPSEISGLIKQRIEKFDNSVELKSEGTIVSVADGIVTIYGLNDVAAGEMIKLPGDVYGLALNLNTDSVGAVVLGDYEHIKEGDKAYCIGRILEVPVGEALLGRVVDALGNPIDGKGEVATDLTSPIEKIAPGVIWRKSVDQALQTGIKSIDSMVPIGRGQRELIIGDRQIGKTAIAVDTIINQKGTGVKCIYVAIGQKASTIANIVRQLEEHGAMEHTIIVAATASDSAALQYIAPYAGCSMGEYFRDRGQDALIVYDDLTKQAWAYRQISLLLRRPPGREAYPGDVFYLHSRLLERAARVNEEYVEKFTNGEVKGKTGSLTALPIIETQAGDISAFVPTNVISITDGQIFLETDLFNSGLRPAINPGNSVSRVGGAAQTKIIKKLGGGIRLALAQYRELEAFSQFASDLDEATRAQLNRGQRVTELLKQKQFSTLSVALMALSLYAADNGYLDNLEVSEVIPFESALHALAETKYSDVIAEINETGKYDADIADKLKIIVEDCKANQAW.

169–176 (GDRQIGKT) is a binding site for ATP.

This sequence belongs to the ATPase alpha/beta chains family. In terms of assembly, F-type ATPases have 2 components, CF(1) - the catalytic core - and CF(0) - the membrane proton channel. CF(1) has five subunits: alpha(3), beta(3), gamma(1), delta(1), epsilon(1). CF(0) has three main subunits: a(1), b(2) and c(9-12). The alpha and beta chains form an alternating ring which encloses part of the gamma chain. CF(1) is attached to CF(0) by a central stalk formed by the gamma and epsilon chains, while a peripheral stalk is formed by the delta and b chains.

The protein localises to the cell inner membrane. It carries out the reaction ATP + H2O + 4 H(+)(in) = ADP + phosphate + 5 H(+)(out). Produces ATP from ADP in the presence of a proton gradient across the membrane. The alpha chain is a regulatory subunit. The chain is ATP synthase subunit alpha from Francisella tularensis subsp. tularensis (strain WY96-3418).